The chain runs to 579 residues: Tyrosine 3-monooxygenase (579 aa).

The segment covering 105-114 (VEFESVEQEQ) has biased composition (acidic residues). Residues 105-132 (VEFESVEQEQSESQSQEPEGNQQPTKND) form a disordered region. Fe cation contacts are provided by histidine 409, histidine 414, and glutamate 454.

This sequence belongs to the biopterin-dependent aromatic amino acid hydroxylase family. Fe(2+) is required as a cofactor.

It localises to the cytoplasm. The protein resides in the perinuclear region. Its subcellular location is the cell projection. The protein localises to the axon. The catalysed reaction is (6R)-L-erythro-5,6,7,8-tetrahydrobiopterin + L-tyrosine + O2 = (4aS,6R)-4a-hydroxy-L-erythro-5,6,7,8-tetrahydrobiopterin + L-dopa. Its pathway is catecholamine biosynthesis; dopamine biosynthesis; dopamine from L-tyrosine: step 1/2. Phosphorylation leads to an increase in the catalytic activity. Functionally, plays an important role in the physiology of adrenergic neurons. The chain is Tyrosine 3-monooxygenase (ple) from Drosophila melanogaster (Fruit fly).